The sequence spans 186 residues: dCTP deaminase (186 aa).

107–112 (KSTYAR) serves as a coordination point for dCTP. Glu133 serves as the catalytic Proton donor/acceptor. Gln152, Tyr166, and Gln176 together coordinate dCTP.

It belongs to the dCTP deaminase family. As to quaternary structure, homotrimer.

The catalysed reaction is dCTP + H2O + H(+) = dUTP + NH4(+). The protein operates within pyrimidine metabolism; dUMP biosynthesis; dUMP from dCTP (dUTP route): step 1/2. Its function is as follows. Catalyzes the deamination of dCTP to dUTP. The protein is dCTP deaminase of Campylobacter curvus (strain 525.92).